We begin with the raw amino-acid sequence, 61 residues long: Small ribosomal subunit protein uS14 (61 aa).

Cys-24, Cys-27, Cys-40, and Cys-43 together coordinate Zn(2+).

It belongs to the universal ribosomal protein uS14 family. Zinc-binding uS14 subfamily. Part of the 30S ribosomal subunit. Contacts proteins S3 and S10. Zn(2+) serves as cofactor.

In terms of biological role, binds 16S rRNA, required for the assembly of 30S particles and may also be responsible for determining the conformation of the 16S rRNA at the A site. In Treponema pallidum (strain Nichols), this protein is Small ribosomal subunit protein uS14.